The chain runs to 163 residues: Leptin (163 aa).

The first 18 residues, 1–18 (MCWRPLCRLWSYLVYVQA), serve as a signal peptide directing secretion. C113 and C163 are disulfide-bonded.

Belongs to the leptin family. Not exclusively localized in adipose tissue but is also expressed in liver.

Its subcellular location is the secreted. Key player in the regulation of energy balance and body weight control. Once released into the circulation, has central and peripheral effects by binding LEPR, found in many tissues, which results in the activation of several major signaling pathways. The chain is Leptin (LEP) from Gallus gallus (Chicken).